A 364-amino-acid polypeptide reads, in one-letter code: Fructose-bisphosphate aldolase C (364 aa).

Tyr5 carries the phosphotyrosine modification. 3 positions are modified to phosphoserine: Ser36, Ser39, and Ser45. Arg56 is a substrate binding site. Lys111 is subject to N6-acetyllysine. Ser132 carries the phosphoserine modification. Residue Lys147 coordinates substrate. Glu188 acts as the Proton acceptor in catalysis. Residue Lys230 is the Schiff-base intermediate with dihydroxyacetone-P of the active site.

It belongs to the class I fructose-bisphosphate aldolase family. Homotetramer. Interacts with ATP6V1E1.

It carries out the reaction beta-D-fructose 1,6-bisphosphate = D-glyceraldehyde 3-phosphate + dihydroxyacetone phosphate. It participates in carbohydrate degradation; glycolysis; D-glyceraldehyde 3-phosphate and glycerone phosphate from D-glucose: step 4/4. This Pan troglodytes (Chimpanzee) protein is Fructose-bisphosphate aldolase C (ALDOC).